The following is a 137-amino-acid chain: Putative FERT-1 protein (137 aa).

The polypeptide is Putative FERT-1 protein (FERT-1) (Ascaris suum (Pig roundworm)).